We begin with the raw amino-acid sequence, 448 residues long: 26S proteasome regulatory subunit 4 homolog (448 aa).

A compositionally biased stretch (polar residues) spans 1 to 10 (MGQAQSGNFS). Residues 1-58 (MGQAQSGNFSNFGDGANGDNKKDQKKDKPKYEPPVPTRTGRRKKKAQSGPDASAKLPT) form a disordered region. Positions 19–31 (DNKKDQKKDKPKY) are enriched in basic and acidic residues. 232–239 (GAPGTGKT) lines the ATP pocket.

This sequence belongs to the AAA ATPase family.

It localises to the cytoplasm. It is found in the nucleus. In terms of biological role, the 26S proteasome is involved in the ATP-dependent degradation of ubiquitinated proteins. The regulatory (or ATPase) complex confers ATP dependency and substrate specificity to the 26S complex. This chain is 26S proteasome regulatory subunit 4 homolog (mts2), found in Schizosaccharomyces pombe (strain 972 / ATCC 24843) (Fission yeast).